Reading from the N-terminus, the 578-residue chain is DNA primase (578 aa).

Residues 40-64 form a CHC2-type zinc finger; the sequence is CPFHQEKTPSFTVNFEKQFYFCFGC. The region spanning 257–339 is the Toprim domain; the sequence is KQILIVEGYV…GKNVKFIFLP (83 aa). The Mg(2+) site is built by Glu263, Asp307, and Asp309.

Belongs to the DnaG primase family. In terms of assembly, monomer. Interacts with DnaB. It depends on Zn(2+) as a cofactor. The cofactor is Mg(2+).

It carries out the reaction ssDNA + n NTP = ssDNA/pppN(pN)n-1 hybrid + (n-1) diphosphate.. Its function is as follows. RNA polymerase that catalyzes the synthesis of short RNA molecules used as primers for DNA polymerase during DNA replication. The chain is DNA primase from Buchnera aphidicola subsp. Baizongia pistaciae (strain Bp).